A 77-amino-acid chain; its full sequence is Probable [Fe-S]-dependent transcriptional repressor (77 aa).

Residues Cys54, Cys59, Cys62, and Cys68 each contribute to the iron-sulfur cluster site.

It belongs to the FeoC family.

May function as a transcriptional regulator that controls feoABC expression. This Proteus mirabilis (strain HI4320) protein is Probable [Fe-S]-dependent transcriptional repressor.